Here is a 338-residue protein sequence, read N- to C-terminus: Aspartate carbamoyltransferase catalytic subunit (338 aa).

Positions 57 and 58 each coordinate carbamoyl phosphate. Lysine 86 serves as a coordination point for L-aspartate. Residues arginine 107, histidine 135, and glutamine 138 each contribute to the carbamoyl phosphate site. L-aspartate contacts are provided by arginine 172 and arginine 234. Carbamoyl phosphate-binding residues include leucine 274 and proline 275.

Belongs to the aspartate/ornithine carbamoyltransferase superfamily. ATCase family. Heterododecamer (2C3:3R2) of six catalytic PyrB chains organized as two trimers (C3), and six regulatory PyrI chains organized as three dimers (R2).

The enzyme catalyses carbamoyl phosphate + L-aspartate = N-carbamoyl-L-aspartate + phosphate + H(+). The protein operates within pyrimidine metabolism; UMP biosynthesis via de novo pathway; (S)-dihydroorotate from bicarbonate: step 2/3. Functionally, catalyzes the condensation of carbamoyl phosphate and aspartate to form carbamoyl aspartate and inorganic phosphate, the committed step in the de novo pyrimidine nucleotide biosynthesis pathway. This is Aspartate carbamoyltransferase catalytic subunit from Cellvibrio japonicus (strain Ueda107) (Pseudomonas fluorescens subsp. cellulosa).